Consider the following 801-residue polypeptide: Phenylalanine--tRNA ligase beta subunit (801 aa).

The 115-residue stretch at 39–153 folds into the tRNA-binding domain; that stretch reads AEGLSKLVVG…EGAIPGDSIF (115 aa). In terms of domain architecture, B5 spans 406-481; that stretch reads TEPVEVSTTL…RIYGYEKLPT (76 aa). 4 residues coordinate Mg(2+): Asp-459, Asp-465, Glu-468, and Glu-469. The 94-residue stretch at 708–801 folds into the FDX-ACB domain; the sequence is TKYPSVSRDI…LVEKVNAEIR (94 aa).

This sequence belongs to the phenylalanyl-tRNA synthetase beta subunit family. Type 1 subfamily. Tetramer of two alpha and two beta subunits. It depends on Mg(2+) as a cofactor.

It is found in the cytoplasm. It catalyses the reaction tRNA(Phe) + L-phenylalanine + ATP = L-phenylalanyl-tRNA(Phe) + AMP + diphosphate + H(+). In Streptococcus agalactiae serotype Ia (strain ATCC 27591 / A909 / CDC SS700), this protein is Phenylalanine--tRNA ligase beta subunit.